An 842-amino-acid polypeptide reads, in one-letter code: MAMLGNVLHLSPMVLATTTTTKPSLLNQSKCTKATPSSLKNCKTIDELKMFHRSLTKQGLDNDVSTITKLVARSCELGTRESLSFAKEVFENSESYGTCFMYNSLIRGYASSGLCNEAILLFLRMMNSGISPDKYTFPFGLSACAKSRAKGNGIQIHGLIVKMGYAKDLFVQNSLVHFYAECGELDSARKVFDEMSERNVVSWTSMICGYARRDFAKDAVDLFFRMVRDEEVTPNSVTMVCVISACAKLEDLETGEKVYAFIRNSGIEVNDLMVSALVDMYMKCNAIDVAKRLFDEYGASNLDLCNAMASNYVRQGLTREALGVFNLMMDSGVRPDRISMLSAISSCSQLRNILWGKSCHGYVLRNGFESWDNICNALIDMYMKCHRQDTAFRIFDRMSNKTVVTWNSIVAGYVENGEVDAAWETFETMPEKNIVSWNTIISGLVQGSLFEEAIEVFCSMQSQEGVNADGVTMMSIASACGHLGALDLAKWIYYYIEKNGIQLDVRLGTTLVDMFSRCGDPESAMSIFNSLTNRDVSAWTAAIGAMAMAGNAERAIELFDDMIEQGLKPDGVAFVGALTACSHGGLVQQGKEIFYSMLKLHGVSPEDVHYGCMVDLLGRAGLLEEAVQLIEDMPMEPNDVIWNSLLAACRVQGNVEMAAYAAEKIQVLAPERTGSYVLLSNVYASAGRWNDMAKVRLSMKEKGLRKPPGTSSIQIRGKTHEFTSGDESHPEMPNIEAMLDEVSQRASHLGHVPDLSNVLMDVDEKEKIFMLSRHSEKLAMAYGLISSNKGTTIRIVKNLRVCSDCHSFAKFASKVYNREIILRDNNRFHYIRQGKCSCGDFW.

PPR repeat units follow at residues 98 to 132 (TCFM…GISP), 133 to 167 (DKYT…GYAK), 168 to 202 (DLFV…NVVS), 203 to 234 (WTSM…EVTP), 235 to 269 (NSVT…GIEV), 270 to 300 (NDLM…YGAS), 301 to 335 (NLDL…GVRP), 336 to 370 (DRIS…GFES), 371 to 401 (WDNI…MSNK), 402 to 436 (TVVT…NIVS), 437 to 463 (WNTI…MQSQ), 469 to 503 (DGVT…GIQL), 504 to 534 (DVRL…LTNR), 535 to 569 (DVSA…GLKP), 570 to 605 (DGVA…GVSP), and 606 to 636 (EDVH…MPME). The interval 641 to 716 (IWNSLLAACR…PPGTSSIQIR (76 aa)) is type E motif. A type E(+) motif region spans residues 717–747 (GKTHEFTSGDESHPEMPNIEAMLDEVSQRAS). Positions 748-842 (HLGHVPDLSN…QGKCSCGDFW (95 aa)) are type DYW motif.

This sequence belongs to the PPR family. PCMP-H subfamily.

The polypeptide is Pentatricopeptide repeat-containing protein At3g22690 (PCMP-H56) (Arabidopsis thaliana (Mouse-ear cress)).